The following is a 281-amino-acid chain: Radiation response metalloprotease IrrE (281 aa).

His-82 serves as a coordination point for Zn(2+). The active site involves Glu-83. Positions 86 and 113 each coordinate Zn(2+). Positions Leu-262–Ser-281 are disordered. A compositionally biased stretch (basic and acidic residues) spans Ser-267 to Ser-281.

As to quaternary structure, interacts with DdrOC.

Protease activity is inhibited by EDTA. In terms of biological role, plays a central regulatory role in DNA repair and protection pathways in response to radiation stress. Acts as a site-specific metalloprotease that cleaves and inactivates the repressor proteins DdrOC and DdrOP3, resulting in induced expression of genes required for DNA repair and cell survival after exposure to radiation. The protein is Radiation response metalloprotease IrrE of Deinococcus deserti (strain DSM 17065 / CIP 109153 / LMG 22923 / VCD115).